The sequence spans 1227 residues: MKLKLTVLLILVHASASYKPPAIEVEDYQVQEHDSIGKFVELEEHTRLILKCSAHHNGDLKYNFPSMEGNVGYDENNFKKRMEEYYDDAFGDKVLTLNDVRESDTGTYSCSSMEHSSLNDTIYVFVHRKKVFLPLKSVMIIYKQGEVMVPCKTTKFVDKSDIELYASNVLVKEASKYNYDQRYGFKITKKLYSEKQIVDVNFECRYKKEENQTATYIITEKEASSDDGYHFSWEKGFQWPHVGYNFSLTCNLNYNGSKIFHGYTNKLSIECPQCSHDPGSHVHVDRHRIIGNKISTTVRIQHLELEDSGKYTCIWEHENKETKYTDYHLYVAPKKAQIKVIETSPTIMRIKENRATSLTAKFAIYPFEKESYTAKWSRIYNSSIHEGPQSETIINDDFRKIAATSFGDGAFSENLDIKAFAVSTNMSGTYVLSISHMDTVQVVQWEVAIENDEPDVQITVREPSSFFISNQEYYKPDTNLHIECISISIPPADVVFEYKTKNSEQFQEIEPNKLVSVGGTFDRGLIYNVTFTEGMDLKCSSIRKGNRAITVNKLIKIGEGFEVRPHHEKSSKATESEPSKIIYEGDNVKLTCVFPLDSDDWSVSWRFENSKSSDISSIPTTTETEIKQYSKHLILNLRDVTTSFTGTYTCVVKNEDSEKLLETSIDVKAISKPSITGGNSNAVVIVDYDQYFEINCNMTGTPPPVYQWFKDGNPYTHGDVDGSILRVSRARGEDDGEFHCLATNRAGDKLNSIEVQVNNAPKGSLFFYWFLALLLLISIIAVFLLTCKLRASNRLTKQKDIALNTLYETMIKHQAGPLPEEMKDLPVEERTYYLPYNNDYEIDPVNLEILNPIGSGHFGVVKKGLLGMAYPKSKIESKTRLPVAVKSSTNPFNVELQKMMAEELKVMCAIPKNPNVLALIGAVTKNMRQGQLYIVTEFIDGGNLREFLQAHRNTFINELVEDEHVPVDDSYLVPNSVKKKIYKFDEKLGEGTRLLVEDPDALCTSDLLSIGLQIAKGMAWLADVPCVHRDLACRNVLITKTKIVRIADFGLSKKHTNKTYYRTKKSKDTPLPVRWMPLECIEEFKFTQKSDVWSFGICLYEIFTLGGTPYPNCDTFNVIEFIRNGNRNKQPEYCHDEIYELMKVCWQFNPKDRPTFNDCITFFENHMRDSSSQFLERVENMLHTEMQEQSKLDDWIQDSRPDVPNVSFQKSPKKQKEERYLIVESHA.

Residues 1 to 17 form the signal peptide; it reads MKLKLTVLLILVHASAS. At 18-764 the chain is on the extracellular side; sequence YKPPAIEVED…VQVNNAPKGS (747 aa). In terms of domain architecture, Ig-like C2-type 1 spans 20 to 110; it reads PPAIEVEDYQ…RESDTGTYSC (91 aa). Cys52 and Cys110 are joined by a disulfide. Asn119, Asn211, Asn245, Asn255, Asn381, Asn425, and Asn528 each carry an N-linked (GlcNAc...) asparagine glycan. One can recognise an Ig-like C2-type 2 domain in the interval 200-325; the sequence is VNFECRYKKE…EHENKETKYT (126 aa). Cys204 and Cys313 are oxidised to a cystine. Ig-like C2-type domains are found at residues 565 to 666 and 673 to 758; these read PHHE…TSID and PSIT…VQVN. Intrachain disulfides connect Cys592-Cys650 and Cys696-Cys740. N-linked (GlcNAc...) asparagine glycosylation is present at Asn697. A helical transmembrane segment spans residues 765–785; it reads LFFYWFLALLLLISIIAVFLL. The Cytoplasmic portion of the chain corresponds to 786 to 1227; sequence TCKLRASNRL…ERYLIVESHA (442 aa). The region spanning 847–1175 is the Protein kinase domain; it reads LEILNPIGSG…HMRDSSSQFL (329 aa). ATP contacts are provided by residues 853-861 and Lys886; that span reads IGSGHFGVV. Asp1030 functions as the Proton acceptor in the catalytic mechanism. The disordered stretch occupies residues 1194–1227; that stretch reads DWIQDSRPDVPNVSFQKSPKKQKEERYLIVESHA. The segment covering 1214 to 1227 has biased composition (basic and acidic residues); it reads KQKEERYLIVESHA.

The protein belongs to the protein kinase superfamily. Tyr protein kinase family. In terms of tissue distribution, expressed in the ALA neuron.

Its subcellular location is the cell membrane. The catalysed reaction is L-tyrosyl-[protein] + ATP = O-phospho-L-tyrosyl-[protein] + ADP + H(+). Receptor tyrosine kinase which may be involved, downstream of pvf-1, in the positioning of ray 1, the most anterior ray sensillum in the male tail. This Caenorhabditis elegans protein is Tyrosine-protein kinase receptor ver-3.